Reading from the N-terminus, the 81-residue chain is Putative defensin-like protein 265 (81 aa).

Positions 1 to 26 (MEKTVSRKVVVLAILLSLSCLCIAKA) are cleaved as a signal peptide. 3 disulfides stabilise this stretch: cysteine 48/cysteine 66, cysteine 54/cysteine 71, and cysteine 58/cysteine 73.

It belongs to the DEFL family.

The protein resides in the secreted. This is Putative defensin-like protein 265 from Arabidopsis thaliana (Mouse-ear cress).